Reading from the N-terminus, the 191-residue chain is Prostaglandin-H2 D-isomerase (191 aa).

Positions Met-1–Ala-28 are cleaved as a signal peptide. Asn-51 is a glycosylation site (N-linked (GlcNAc...) asparagine). The active-site Nucleophile is the Cys-65. Asn-78 carries an N-linked (GlcNAc...) asparagine glycan. Cys-89 and Cys-186 are oxidised to a cystine.

This sequence belongs to the calycin superfamily. Lipocalin family. In terms of assembly, monomer. In terms of tissue distribution, in the male reproductive system, expressed in the testis, epididymis and prostate, and secreted into the seminal fluid.

It localises to the rough endoplasmic reticulum. The protein resides in the nucleus membrane. Its subcellular location is the golgi apparatus. It is found in the cytoplasm. The protein localises to the perinuclear region. It localises to the secreted. The catalysed reaction is prostaglandin H2 = prostaglandin D2. Functionally, catalyzes the conversion of PGH2 to PGD2, a prostaglandin involved in smooth muscle contraction/relaxation and a potent inhibitor of platelet aggregation. Involved in a variety of CNS functions, such as sedation, NREM sleep and PGE2-induced allodynia, and may have an anti-apoptotic role in oligodendrocytes. Binds small non-substrate lipophilic molecules, including biliverdin, bilirubin, retinal, retinoic acid and thyroid hormone, and may act as a scavenger for harmful hydrophobic molecules and as a secretory retinoid and thyroid hormone transporter. Possibly involved in development and maintenance of the blood-brain, blood-retina, blood-aqueous humor and blood-testis barrier. It is likely to play important roles in both maturation and maintenance of the central nervous system and male reproductive system. Involved in PLA2G3-dependent maturation of mast cells. PLA2G3 is secreted by immature mast cells and acts on nearby fibroblasts upstream to PTDGS to synthesize PGD2, which in turn promotes mast cell maturation and degranulation via PTGDR. The chain is Prostaglandin-H2 D-isomerase (PTGDS) from Bos taurus (Bovine).